The chain runs to 436 residues: GTPase Der (436 aa).

2 consecutive EngA-type G domains span residues 4 to 167 (PVIA…PKIE) and 176 to 351 (IRFS…ESHS). GTP-binding positions include 10-17 (GRPNVGKS), 57-61 (DTGGI), 119-122 (NKVD), 182-189 (GRPNVGKS), 229-233 (DTAGM), and 294-297 (NKWD). A KH-like domain is found at 352 to 436 (IRIQTNVLND…PIHIIARARD (85 aa)).

The protein belongs to the TRAFAC class TrmE-Era-EngA-EngB-Septin-like GTPase superfamily. EngA (Der) GTPase family. In terms of assembly, associates with the 50S ribosomal subunit.

In terms of biological role, GTPase that plays an essential role in the late steps of ribosome biogenesis. This is GTPase Der from Bacillus anthracis (strain A0248).